We begin with the raw amino-acid sequence, 725 residues long: Catalase-peroxidase (725 aa).

Composition is skewed to polar residues over residues 1-12 (MSTSNDPSNNAS) and 23-32 (PKQSAGSGTA). A signal peptide spans 1–20 (MSTSNDPSNNASAGKCPFHA). A disordered region spans residues 1 to 35 (MSTSNDPSNNASAGKCPFHAETPKQSAGSGTANRD). The segment at residues 105–226 (WHGAGTYRTV…IGATEMGLIY (122 aa)) is a cross-link (tryptophyl-tyrosyl-methioninium (Trp-Tyr) (with M-252)). Histidine 106 serves as the catalytic Proton acceptor. The tryptophyl-tyrosyl-methioninium (Tyr-Met) (with W-105) cross-link spans 226–252 (YVNPEGPNASGEPLSAAAAIRATFGNM). Residue histidine 267 participates in heme b binding.

This sequence belongs to the peroxidase family. Peroxidase/catalase subfamily. As to quaternary structure, homodimer or homotetramer. Heme b serves as cofactor. Post-translationally, formation of the three residue Trp-Tyr-Met cross-link is important for the catalase, but not the peroxidase activity of the enzyme.

The enzyme catalyses H2O2 + AH2 = A + 2 H2O. It carries out the reaction 2 H2O2 = O2 + 2 H2O. Functionally, bifunctional enzyme with both catalase and broad-spectrum peroxidase activity. In Klebsiella pneumoniae subsp. pneumoniae (strain ATCC 700721 / MGH 78578), this protein is Catalase-peroxidase.